Here is a 744-residue protein sequence, read N- to C-terminus: Merozoite surface protein 9 (744 aa).

The N-terminal stretch at 1–23 (MMNMKIVLFSLLLFVIRWNIISC) is a signal peptide. Residues 77-235 (KELLKEKQYT…VNDEDDVNDE (159 aa)) form an interaction with MSP1 and host SLC4A1/Band 3 region. Disordered regions lie at residues 202–282 (KSQG…ATAY), 459–487 (DNQA…PTED), 512–540 (NNTP…ENFD), and 666–744 (VDAL…EESK). The span at 211–224 (SQNQNENNDNQKYQ) shows a compositional bias: polar residues. 8 repeat units span residues 226–231 (VNDEDD), 232–237 (VNDEED), 238–243 (TNDDED), 244–249 (TNDEED), 250–255 (TNDDED), 256–261 (TNDDED), 262–267 (TNDEED), and 268–273 (TNDEED). Residues 226–273 (VNDEDDVNDEEDTNDDEDTNDEEDTNDDEDTNDDEDTNDEEDTNDEED) are 8 X 6 AA tandem repeats of [VT]-N-D-[ED]-[ED]-D. Acidic residues predominate over residues 226–274 (VNDEDDVNDEEDTNDDEDTNDEEDTNDDEDTNDDEDTNDEEDTNDEEDH). Positions 364–528 (LKDNLINYEF…PPTQSKKKNK (165 aa)) are interaction with MSP1 and host SLC4A1/Band 3. Positions 459 to 473 (DNQAVDTKSMEEPKV) are enriched in basic and acidic residues. A compositionally biased stretch (low complexity) spans 512–521 (NNTPNVVPPT). A coiled-coil region spans residues 644–734 (NQETEEEMEK…QEEEEEEEIV (91 aa)). Composition is skewed to basic and acidic residues over residues 672–698 (KNKE…KEKE) and 706–719 (EKEK…KEEK). Acidic residues predominate over residues 720 to 734 (EKEEEQEEEEEEEIV).

The protein belongs to the plasmodium ABRA family. As to quaternary structure, forms a complex composed of MSP1, MSP6, MSP7, MSP9 and MSP3; within the complex, MSP6 and MSP9 mediate the binding to the host erythrocyte. Interacts with MSP1 subunits p19 and p42; the interaction is direct. Interacts with host SLC4A1/Band 3 protein (via the 5ABC region). MSP1 subunits p19 or p42, and MSP9 form a co-ligand complex that interacts with host SLC4A1/Band 3 protein. In terms of processing, not glycosylated.

The protein localises to the cell membrane. The protein resides in the parasitophorous vacuole lumen. It localises to the secreted. During the asexual blood stage, involved in the sialic acid-independent (SAID) merozoite invasion of host erythrocytes by binding to host SLC4A1/Band 3 protein on the surface of the host erythrocyte. This chain is Merozoite surface protein 9, found in Plasmodium falciparum (isolate 7G8).